The sequence spans 408 residues: MPKVGIAAQAGRTRVRRAWLTALMMTAVMIGAVACGSGRGPAPIKVIADKGTPFADLLVPKLTASVTDGAVGVTVDAPVSVTAADGVLAAVTMVNDNGRPVAGRLSPDGLRWSTTEQLGYNRRYTLNATALGLGGAATRQLTFQTSSPAHLTMPYVMPGDGEVVGVGEPVAIRFDENIADRGAAEKAIKITTNPPVEGAFYWLNNREVRWRPEHFWKPGTAVDVAVNTYGVDLGEGMFGEDNVQTHFTIGDEVIATADDNTKILTVRVNGEVVKSMPTSMGKDSTPTANGIYIVGSRYKHIIMDSSTYGVPVNSPNGYRTDVDWATQISYSGVFVHSAPWSVGAQGHTNTSHGCLNVSPSNAQWFYDHVKRGDIVEVVNTVGGTLPGIDGLGDWNIPWDQWRAGNAKA.

The signal sequence occupies residues 1–34 (MPKVGIAAQAGRTRVRRAWLTALMMTAVMIGAVA). A lipid anchor (N-palmitoyl cysteine) is attached at C35. A lipid anchor (S-diacylglycerol cysteine) is attached at C35. Ca(2+) is bound by residues D232, E235, and G236. The region spanning 253–378 (VIATADDNTK…VKRGDIVEVV (126 aa)) is the L,D-TPase catalytic domain. Residues Y318 and 331–332 (SG) each bind substrate. The active-site Proton donor/acceptor is the H336. The Nucleophile role is filled by C354. A substrate-binding site is contributed by N356.

Monomer.

It localises to the cell membrane. It functions in the pathway cell wall biogenesis; peptidoglycan biosynthesis. With respect to regulation, is irreversibly inactivated by the beta-lactams carbapenems via the formation of a covalent adduct resulting from acylation of the catalytic Cys. In terms of biological role, generates 3-&gt;3 cross-links in peptidoglycan, catalyzing the cleavage of the mDap(3)-D-Ala(4) bond of a tetrapeptide donor stem and the formation of a bond between the carbonyl of mDap(3) of the donor stem and the side chain of mDap(3) of the acceptor stem. Is specific for donor substrates containing a stem tetrapeptide since it cannot use pentapeptide stems. Is essential for virulence in a mouse model of acute infection. This Mycobacterium tuberculosis (strain CDC 1551 / Oshkosh) protein is L,D-transpeptidase 2 (ldtB).